The following is an 89-amino-acid chain: Small ribosomal subunit protein uS19 (89 aa).

It belongs to the universal ribosomal protein uS19 family.

Functionally, protein S19 forms a complex with S13 that binds strongly to the 16S ribosomal RNA. This chain is Small ribosomal subunit protein uS19, found in Rhodopirellula baltica (strain DSM 10527 / NCIMB 13988 / SH1).